A 904-amino-acid polypeptide reads, in one-letter code: MTSHSPKLTPMFEQYMNIKAEYPDALLFYRMGDFYELFFEDAEVAARELQIALTCRNPNAENKVPMCGVPHHSARSYISQLVDKGYKVAICEQMEDPREAKGLVKRGVIRVLTSGTALEDENLSPKAHTYLGALCWDKSEGAGGFAWVDFSTGEWSGLQSRKEQELWQWVQKMAPRELLLADTLTPPASLELTETQFSKVPERAYFDYKRSAEKIMSAQQVAELGALGLENRKELVRACGALLTYLSQTQKQDLNHLCQFKPLNLNRHLLLDEITERNLELFRRLDGRKGKGTLWHVLDHTVTPMGGRLLQERLKHPWREQAPIDETQEAVSHFFAHNTLRRQLREALDTVYDIERLSTRIFLNRATPRDYVALRQSLKALPAVRELLEAPQTGDGRYATPEEQLGAALPPFLHRMLKSWDDLADYHDLLEKALVDNPPHVITEGGLFRQGFHPALDELMDLSEHGASKLHDLLAEVQQTTGISKIKLGNNRVFGYYFEVPKSVSEELPDTFVRRQTLANAERYTSERLKELEEKLFSAADKRKTMELKLFQQLREHVAQARPRVLFMADLLATLDHWQGLAEAARHWNWVRPVLHDGQDIVIREGRHPVVEAVQGPAGFIPNDLRIDDQRRLLLITGPNMAGKSTVLRQAAIICILAQIGSFVPAREARIGLCDRIFSRVGASDNLAQGQSTFMVEMMETARILRQATRRSLVILDEIGRGTSTFDGLALAWAVVEELMKKQQAGIRTLFATHYHELTSLEGTIPGVHNMNIAIKEWGGEIVFLRRLVPGPSDRSYGVEVAKLAGVPQNVVQRARQILELLEQKSKADGTRRPASYHEAQPLLPGMPEPPSTASAEPPQTVTPPEPPVLTALRDLDTDNLTPLEALTVLTEWKTLWGAGKNEC.

Residue 638 to 645 coordinates ATP; the sequence is GPNMAGKS. Positions 825-869 are disordered; it reads KSKADGTRRPASYHEAQPLLPGMPEPPSTASAEPPQTVTPPEPPV.

It belongs to the DNA mismatch repair MutS family.

Its function is as follows. This protein is involved in the repair of mismatches in DNA. It is possible that it carries out the mismatch recognition step. This protein has a weak ATPase activity. This Oleidesulfovibrio alaskensis (strain ATCC BAA-1058 / DSM 17464 / G20) (Desulfovibrio alaskensis) protein is DNA mismatch repair protein MutS.